The primary structure comprises 316 residues: Cation efflux system protein CzcD (316 aa).

The next 6 membrane-spanning stretches (helical) occupy residues 17–37, 47–67, 82–102, 115–135, 152–172, and 174–194; these read LKIA…GGVM, AAHM…IAIA, FEIL…IYIL, IEST…LISM, YLEV…AIII, and FTGW…WVLP.

The protein belongs to the cation diffusion facilitator (CDF) transporter (TC 2.A.4) family. SLC30A subfamily.

The protein resides in the cell membrane. In terms of biological role, necessary for activation of the czc determinant. This Alcaligenes sp. (strain CT14) protein is Cation efflux system protein CzcD (czcD).